A 1085-amino-acid polypeptide reads, in one-letter code: Error-prone DNA polymerase 2 (1085 aa).

The disordered stretch occupies residues 1040–1066 (AGRGDEFAHGGGGPDSRDRQKPVVPRD).

This sequence belongs to the DNA polymerase type-C family. DnaE2 subfamily.

It is found in the cytoplasm. It catalyses the reaction DNA(n) + a 2'-deoxyribonucleoside 5'-triphosphate = DNA(n+1) + diphosphate. Its function is as follows. DNA polymerase involved in damage-induced mutagenesis and translesion synthesis (TLS). It is not the major replicative DNA polymerase. In Agrobacterium fabrum (strain C58 / ATCC 33970) (Agrobacterium tumefaciens (strain C58)), this protein is Error-prone DNA polymerase 2.